A 142-amino-acid polypeptide reads, in one-letter code: Large ribosomal subunit protein uL13 (142 aa).

Belongs to the universal ribosomal protein uL13 family. Part of the 50S ribosomal subunit.

In terms of biological role, this protein is one of the early assembly proteins of the 50S ribosomal subunit, although it is not seen to bind rRNA by itself. It is important during the early stages of 50S assembly. The polypeptide is Large ribosomal subunit protein uL13 (Burkholderia pseudomallei (strain 1106a)).